The chain runs to 420 residues: MRWRTILLQYCFLLITCLLTALEAVPIDIDKTKVQNIHPVESAKIEPPDTGLYYDEYLKQVIDVLETDKHFREKLQKADIEEIKSGRLSKELDLVSHHVRTKLDELKRQEVGRLRMLIKAKLDSLQDIGMDHQALLKQFDHLNHLNPDKFESTDLDMLIKAATSDLEHYDKTRHEEFKKYEMMKEHERREYLKTLNEEKRKEEESKFEEMKKKHENHPKVNHPGSKDQLKEVWEETDGLDPNDFDPKTFFKLHDVNSDGFLDEQELEALFTKELEKVYDPKNEEDDMVEMEEERLRMREHVMNEVDTNKDRLVTLEEFLKATEKKEFLEPDSWETLDQQQFFTEEELKEYENIIALQENELKKKADELQKQKEELQRQHDQLEAQKLEYHQVIQQMEQKKLQQGIPPSGPAGELKFEPHI.

A signal peptide spans 1–24 (MRWRTILLQYCFLLITCLLTALEA). A DNA-binding region spans residues 171–223 (KTRHEEFKKYEMMKEHERREYLKTLNEEKRKEEESKFEEMKKKHENHPKVNHP). The segment covering 195 to 212 (LNEEKRKEEESKFEEMKK) has biased composition (basic and acidic residues). Residues 195-225 (LNEEKRKEEESKFEEMKKKHENHPKVNHPGS) form a disordered region. Positions 213–420 (KHENHPKVNH…AGELKFEPHI (208 aa)) are binds to necdin. EF-hand domains lie at 241–276 (PNDF…ELEK) and 293–328 (ERLR…KEFL). Ca(2+) is bound by residues Asp-254 and Asn-256. Ser-257 bears the Phosphoserine mark. Ca(2+) is bound by residues Asp-258, Glu-265, Asp-306, Asn-308, Asp-310, and Glu-317. The GBA signature appears at 304–334 (EVDTNKDRLVTLEEFLKATEKKEFLEPDSWE). At Ser-332 the chain carries Phosphoserine. The tract at residues 398–420 (QKKLQQGIPPSGPAGELKFEPHI) is disordered.

It belongs to the nucleobindin family. As to quaternary structure, interacts (via GBA motif) with guanine nucleotide-binding protein G(i) alpha subunit GNAI3. Preferentially interacts with inactive rather than active GNAI3. Interaction with GNAI3 is inhibited when NUCB2 binds calcium, probably due to a conformational change which renders the GBA motif inaccessible. Binds to the postmitotic growth suppressor NDN; coexpression abolishes NUCB2 secretion. Interacts with MC4R. In terms of tissue distribution, predominantly expressed in spleen, testis and normal stomach.

The protein resides in the golgi apparatus. It is found in the membrane. The protein localises to the cytoplasm. Its subcellular location is the secreted. It localises to the endoplasmic reticulum. The protein resides in the nucleus envelope. Its function is as follows. Calcium-binding protein which may have a role in calcium homeostasis. Acts as a non-receptor guanine nucleotide exchange factor which binds to and activates guanine nucleotide-binding protein (G-protein) alpha subunit GNAI3. In terms of biological role, anorexigenic peptide, seems to play an important role in hypothalamic pathways regulating food intake and energy homeostasis, acting in a leptin-independent manner. May also exert hypertensive roles and modulate blood pressure through directly acting on peripheral arterial resistance. In intestinal epithelial cells, plays a role in the inhibition of hepatic glucose production via MC4R receptor leading to increased cyclic adenosine monophosphate (cAMP) levels and glucagon-like peptide 1 (GLP-1) secretion. The sequence is that of Nucleobindin-2 from Homo sapiens (Human).